We begin with the raw amino-acid sequence, 1515 residues long: Metal resistance protein YCF1 (1515 aa).

The Vacuolar segment spans residues 1–32; the sequence is MAGNLVSWACKLCRSPEGFGPISFYGDFTQCF. A helical membrane pass occupies residues 33–53; sequence IDGVILNLSAIFMITFGIRDL. The Cytoplasmic segment spans residues 54-73; it reads VNLCKKKHSGIKYRRNWIIV. The helical transmembrane segment at 74-94 threads the bilayer; the sequence is SRMALVLLEIAFVSLASLNIS. The Vacuolar portion of the chain corresponds to 95 to 99; that stretch reads KEEAE. The helical transmembrane segment at 100–120 threads the bilayer; sequence NFTIVSQYASTMLSLFVALAL. Topologically, residues 121 to 130 are cytoplasmic; sequence HWIEYDRSVV. A helical transmembrane segment spans residues 131-151; it reads ANTVLLFYWLFETFGNFAKLI. Over 152–169 the chain is Vacuolar; that stretch reads NILIRHTYEGIWYSGQTG. A helical membrane pass occupies residues 170-190; that stretch reads FILTLFQVITCASILLLEALP. At 191 to 278 the chain is on the cytoplasmic side; it reads KKPLMPHQHI…QKSNPSLSWA (88 aa). At serine 251 the chain carries Phosphoserine. A helical membrane pass occupies residues 279-299; that stretch reads ICRTFGSKMLLAAFFKAIHDV. Residues 287–590 form the ABC transmembrane type-1 1 domain; the sequence is MLLAAFFKAI…IPMVLNSFIE (304 aa). Residues 300–345 are Vacuolar-facing; the sequence is LAFTQPQLLRILIKFVTDYNSERQDDHSSLQGFENNHPQKLPIVRG. A helical membrane pass occupies residues 346 to 366; the sequence is FLIAFAMFLVGFTQTSVLHQY. The Cytoplasmic portion of the chain corresponds to 367-422; the sequence is FLNVFNTGMYIKSALTALIYQKSLVLSNEASGLSSTGDIVNLMSVDVQKLQDLTQW. The helical transmembrane segment at 423 to 443 threads the bilayer; the sequence is LNLIWSGPFQIIICLYSLYKL. Topologically, residues 444–446 are vacuolar; sequence LGN. A helical transmembrane segment spans residues 447 to 467; that stretch reads SMWVGVIILVIMMPLNSFLMR. At 468–530 the chain is on the cytoplasmic side; that stretch reads IQKKLQKSQM…NLTKLGCYMA (63 aa). Residues 531–551 traverse the membrane as a helical segment; that stretch reads VTSFQFNIVPFLVSCCTFAVF. Topologically, residues 552-572 are vacuolar; the sequence is VYTEDRALTTDLVFPALTLFN. The chain crosses the membrane as a helical span at residues 573–593; it reads LLSFPLMIIPMVLNSFIEASV. Topologically, residues 594–943 are cytoplasmic; sequence SIGRLFTFFT…VKWNIYLEYA (350 aa). Residues 626–853 form the ABC transporter 1 domain; the sequence is INIGDDATFL…ADSPLWKLLN (228 aa). Position 663–670 (663–670) interacts with ATP; sequence GKVGSGKT. Phosphoserine occurs at positions 873, 903, and 908. Phosphothreonine is present on threonine 911. Serine 914 is modified (phosphoserine). Residues 944-964 form a helical membrane-spanning segment; it reads KACNPKSVCVFILFIVISMFL. The 285-residue stretch at 951-1235 folds into the ABC transmembrane type-1 2 domain; it reads VCVFILFIVI…IVRMTVEVET (285 aa). Residues 965–1001 are Vacuolar-facing; the sequence is SVMGNVWLKHWSEVNSRYGSNPNAARYLAIYFALGIG. The chain crosses the membrane as a helical span at residues 1002-1023; sequence SALATLIQTIVLWVFCTIHASK. The Cytoplasmic portion of the chain corresponds to 1024 to 1066; the sequence is YLHNLMTNSVLRAPMTFFETTPIGRILNRFSNDIYKVDALLGR. The helical transmembrane segment at 1067–1087 threads the bilayer; that stretch reads TFSQFFVNAVKVTFTITVICA. A topological domain (vacuolar) is located at residue threonine 1088. A helical transmembrane segment spans residues 1089-1109; that stretch reads TWQFIFIIIPLSVFYIYYQQY. Residues 1110–1180 are Cytoplasmic-facing; the sequence is YLRTSRELRR…NANRWLAYRL (71 aa). Residues 1181 to 1201 form a helical membrane-spanning segment; it reads ELIGSIIILGAATLSVFRLKQ. Residues 1202–1205 lie on the Vacuolar side of the membrane; it reads GTLT. Residues 1206–1226 form a helical membrane-spanning segment; that stretch reads AGMVGLSLSYALQITQTLNWI. At 1227 to 1515 the chain is on the cytoplasmic side; that stretch reads VRMTVEVETN…CMEAGLVNEN (289 aa). The 236-residue stretch at 1272-1507 folds into the ABC transporter 2 domain; that stretch reads IKFNNYSTRY…NKSLFYSLCM (236 aa). An ATP-binding site is contributed by 1306–1313; sequence GRTGAGKS.

It belongs to the ABC transporter superfamily. ABCC family. Conjugate transporter (TC 3.A.1.208) subfamily.

The protein localises to the vacuole membrane. The catalysed reaction is Cd(2+)(in) + ATP + H2O = Cd(2+)(out) + ADP + phosphate + H(+). The enzyme catalyses an S-substituted glutathione(in) + ATP + H2O = an S-substituted glutathione(out) + ADP + phosphate + H(+). In terms of biological role, cooperates for the ATP-dependent vacuolar transport of bilirubin and glutathione conjugates. The polypeptide is Metal resistance protein YCF1 (YCF1) (Saccharomyces cerevisiae (strain ATCC 204508 / S288c) (Baker's yeast)).